The chain runs to 227 residues: MATPASITNVTVEFLQFPALVTPPGSTKSYFLGGAGVRGLNIQEEFVKFTGIGVYLEDKAVSSLAAKWKGKSAAELLDSLDFYRDIIKGPFEKLIRGSKLRTLDGREYVRKVSENCVAHMQSVGTYSDEEEKAIEEFRNAFKDQNFPPGSTVFYKQSPTGTLGQLIFSKDETIPEHEHAVIDNKPLSEAVLETMIGEIPVSPALKESLATRFHQFFKELEANPNIEN.

Residues Thr50, Asn115, and Thr193 each contribute to the substrate site.

Belongs to the chalcone isomerase family.

It carries out the reaction a chalcone = a flavanone.. It participates in secondary metabolite biosynthesis; flavonoid biosynthesis. Catalyzes the intramolecular cyclization of bicyclic chalcones into tricyclic (S)-flavanones. Responsible for the isomerization of 4,2',4',6'-tetrahydroxychalcone (also termed chalcone) into naringenin. This is Chalcone--flavanone isomerase 2-B (CHI2-B) from Glycine max (Soybean).